Reading from the N-terminus, the 809-residue chain is H(+)/Cl(-) exchange transporter 7 (809 aa).

Residues 1-130 (MANVSKKVSW…TAFRTVEIKR (130 aa)) lie on the Cytoplasmic side of the membrane. Phosphoserine is present on residues serine 9 and serine 64. 2 consecutive transmembrane segments (helical) span residues 131-163 (WVICAMVGILTGLVACFIDIVVEKLAGLKYRLV) and 178-201 (FSLLLWAALNAAFVLLGSTIVAFI). The short motif at 207–211 (GSGIP) is the Selectivity filter part_1 element. Residue serine 208 participates in chloride binding. The helical intramembrane region spans 210-217 (IPQIKCFL). 2 consecutive transmembrane segments (helical) span residues 227 to 245 (RLKTLVIKVSGVILSVVGG) and 251 to 268 (EGPMIHSGSVIAAGISQG). Positions 249-253 (GKEGP) match the Selectivity filter part_2 motif. 2 consecutive intramembrane regions (helical) follow at residues 292–304 (FVSAGAAAGVSAA) and 308–316 (PVGGVLFSL). 5 helical membrane passes run 326–345 (FLTWRIFFASMISTFTLNFV), 379–409 (IPIFIAMGVVGGILGAVFNALNYWLTMFRIR), 414–436 (PCLQVVEATLVAAVTATAAFVLI), 491–511 (PMTLGLFTLVYFFLACWTYGL), and 516–539 (GVFIPSLLIGAAWGRLFGISLSYI). The short motif at 516-520 (GVFIP) is the Selectivity filter part_3 element. Position 518 (phenylalanine 518) interacts with chloride. Positions 549 to 563 (GKYALMGAAAQLGGI) form an intramembrane region, helical. The segment at residues 564-566 (VRM) is an intramembrane region (note=Loop between two helices). Residues 567–578 (TLSLTVIMMEAT) constitute an intramembrane region (helical). The note=Loop between two helices intramembrane region spans 579–582 (SSVT). The helical transmembrane segment at 583–601 (YGFPIMLVLMTAKIVGDVF) threads the bilayer. The Cytoplasmic segment spans residues 602 to 809 (IEGLYDMHIQ…GLEELSLAQT (208 aa)). Tyrosine 606 contacts chloride. CBS domains lie at 635–699 (MSTP…VFVE) and 745–803 (MNPS…GLEE). ATP is bound by residues 662-664 (HNG) and 787-790 (TRKD). Serine 805 bears the Phosphoserine mark.

It belongs to the chloride channel (TC 2.A.49) family. ClC-7/CLCN7 subfamily. In terms of assembly, chloride channel 7 are heteromers of alpha (CLCN7) and beta (OSTM1) subunits.

It localises to the lysosome membrane. It carries out the reaction 2 chloride(in) + H(+)(out) = 2 chloride(out) + H(+)(in). Its function is as follows. Slowly voltage-gated channel mediating the exchange of chloride ions against protons. Functions as antiporter and contributes to the acidification of the lysosome lumen and may be involved in maintaining lysosomal pH. The CLC channel family contains both chloride channels and proton-coupled anion transporters that exchange chloride or another anion for protons. The presence of conserved gating glutamate residues is typical for family members that function as antiporters. The protein is H(+)/Cl(-) exchange transporter 7 (CLCN7) of Bos taurus (Bovine).